We begin with the raw amino-acid sequence, 244 residues long: ATP synthase subunit 4, mitochondrial (244 aa).

The transit peptide at 1–36 directs the protein to the mitochondrion; sequence MASRLAKSAICAARVRPVLSSRTIPAAATTLTSTRS.

Belongs to the eukaryotic ATPase B chain family. In terms of assembly, F-type ATPases have 2 components, CF(1) - the catalytic core - and CF(0) - the membrane proton channel. In yeast, the dimeric form of ATP synthase consists of 17 polypeptides: alpha, beta, gamma, delta, epsilon, 4 (B), 5 (OSCP), 6 (A), 8, 9 (C), d, E (Tim11), f, g, h, i/j and k.

It localises to the mitochondrion. The protein localises to the mitochondrion inner membrane. Mitochondrial membrane ATP synthase (F(1)F(0) ATP synthase or Complex V) produces ATP from ADP in the presence of a proton gradient across the membrane which is generated by electron transport complexes of the respiratory chain. F-type ATPases consist of two structural domains, F(1) - containing the extramembraneous catalytic core, and F(0) - containing the membrane proton channel, linked together by a central stalk and a peripheral stalk. During catalysis, ATP synthesis in the catalytic domain of F(1) is coupled via a rotary mechanism of the central stalk subunits to proton translocation. Part of the complex F(0) domain and the peripheric stalk, which acts as a stator to hold the catalytic alpha(3)beta(3) subcomplex and subunit a/ATP6 static relative to the rotary elements. In Paracoccidioides brasiliensis, this protein is ATP synthase subunit 4, mitochondrial (ATP4).